Here is a 444-residue protein sequence, read N- to C-terminus: Methylenetetrahydrofolate--tRNA-(uracil-5-)-methyltransferase TrmFO (444 aa).

10-15 (GAGLAG) contributes to the FAD binding site.

The protein belongs to the MnmG family. TrmFO subfamily. FAD is required as a cofactor.

The protein resides in the cytoplasm. The enzyme catalyses uridine(54) in tRNA + (6R)-5,10-methylene-5,6,7,8-tetrahydrofolate + NADH + H(+) = 5-methyluridine(54) in tRNA + (6S)-5,6,7,8-tetrahydrofolate + NAD(+). The catalysed reaction is uridine(54) in tRNA + (6R)-5,10-methylene-5,6,7,8-tetrahydrofolate + NADPH + H(+) = 5-methyluridine(54) in tRNA + (6S)-5,6,7,8-tetrahydrofolate + NADP(+). Functionally, catalyzes the folate-dependent formation of 5-methyl-uridine at position 54 (M-5-U54) in all tRNAs. The chain is Methylenetetrahydrofolate--tRNA-(uracil-5-)-methyltransferase TrmFO from Streptococcus sanguinis (strain SK36).